The following is a 209-amino-acid chain: rRNA N(6)-adenosine-methyltransferase METTL5 (209 aa).

S-adenosyl-L-methionine contacts are provided by residues Gln28, Thr31, Gly59, Cys62, Val64, Asp81, and 108-109; that span reads DV.

This sequence belongs to the methyltransferase superfamily. PrmA family. In terms of assembly, heterodimer; heterodimerizes with TRMT112. Ubiquitously expressed in brain.

It localises to the nucleus. It is found in the presynapse. The protein localises to the postsynapse. It carries out the reaction adenosine(1832) in 18S rRNA + S-adenosyl-L-methionine = N(6)-methyladenosine(1832) in 18S rRNA + S-adenosyl-L-homocysteine + H(+). With respect to regulation, rRNA N6-adenosine-methyltransferase activity is inhibited by zinc. Functionally, catalytic subunit of a heterodimer with TRMT112, which specifically methylates the 6th position of adenine in position 1832 of 18S rRNA. N6-methylation of adenine(1832) in 18S rRNA resides in the decoding center of 18S rRNA and is required for translation and embryonic stem cells (ESCs) pluripotency and differentiation. The polypeptide is rRNA N(6)-adenosine-methyltransferase METTL5 (Mus musculus (Mouse)).